Here is a 123-residue protein sequence, read N- to C-terminus: Protein TraJ (123 aa).

Monomer.

It is found in the cytoplasm. Its function is as follows. Transfer of plasmid RP4 during bacterial conjugation requires the plasmid-encoded TraJ protein, which binds to a 19-base pair invert sequence repetition within the transfer origin. TraJ protein is bound to only one side of the DNA helix. This nucleoprotein structure is the initial complex in the pathway to assemble a functional relaxosome. In Escherichia coli, this protein is Protein TraJ (traJ).